The primary structure comprises 145 residues: Small ribosomal subunit protein uS9 (145 aa).

It belongs to the universal ribosomal protein uS9 family.

The protein localises to the cytoplasm. This chain is Small ribosomal subunit protein uS9 (RPS16), found in Gossypium hirsutum (Upland cotton).